Reading from the N-terminus, the 85-residue chain is uncharacterized protein (85 aa).

The disordered stretch occupies residues Ser-35–Ile-85.

This is an uncharacterized protein from Pasteurella multocida (strain Pm70).